A 114-amino-acid polypeptide reads, in one-letter code: Ribonuclease P protein component (114 aa).

The protein belongs to the RnpA family. As to quaternary structure, consists of a catalytic RNA component (M1 or rnpB) and a protein subunit.

The catalysed reaction is Endonucleolytic cleavage of RNA, removing 5'-extranucleotides from tRNA precursor.. Its function is as follows. RNaseP catalyzes the removal of the 5'-leader sequence from pre-tRNA to produce the mature 5'-terminus. It can also cleave other RNA substrates such as 4.5S RNA. The protein component plays an auxiliary but essential role in vivo by binding to the 5'-leader sequence and broadening the substrate specificity of the ribozyme. The sequence is that of Ribonuclease P protein component from Staphylococcus haemolyticus (strain JCSC1435).